Consider the following 270-residue polypeptide: Nodule lectin (270 aa).

The N-terminal stretch at 1-33 is a signal peptide; that stretch reads MAFYRTNLPTRELFSLVSVVIVLLATNINSVQA. Positions 34–41 are excised as a propeptide; it reads LSFNFTKL. The N-linked (GlcNAc...) asparagine glycan is linked to Asn134.

Belongs to the leguminous lectin family. Post-translationally, glycosylated in a boron-dependent manner. Glycosylation is required for localization to symbiosomes. 3 different glycosylation variants, NLEC-1A, NLEC-1B and NLEC-1C, have been identified. In terms of tissue distribution, expressed in nodules of Rhizobium-infected and uninfected roots and in the root stele near the nodule attachment point. In roots which have been colonized by the endomycorrhizal fungus G.versiforme, detected only in cortical cells colonized by the fungus, mainly those containing arbuscules.

The protein resides in the symbiosome. It localises to the peribacteroid space. It is found in the peribacteroid membrane. Its function is as follows. Involved in symbiosome development. The polypeptide is Nodule lectin (NLEC1) (Pisum sativum (Garden pea)).